The primary structure comprises 845 residues: AdoMet-dependent rRNA methyltransferase SPB1 (845 aa).

5 residues coordinate S-adenosyl-L-methionine: glycine 58, tryptophan 60, aspartate 78, aspartate 94, and aspartate 119. The active-site Proton acceptor is lysine 159. Disordered stretches follow at residues glycine 223–glutamine 247 and serine 279–histidine 298. Coiled coils occupy residues threonine 366–isoleucine 402 and aspartate 464–alanine 502. A compositionally biased stretch (basic and acidic residues) spans arginine 496 to aspartate 512. Disordered stretches follow at residues arginine 496–glutamate 546, glutamate 587–lysine 660, and lysine 788–lysine 821. 4 stretches are compositionally biased toward acidic residues: residues alanine 513–valine 528, methionine 536–aspartate 545, asparagine 610–phenylalanine 624, and aspartate 633–valine 648. Residues isoleucine 739 to lysine 796 adopt a coiled-coil conformation. Positions lysine 788–proline 797 are enriched in basic residues.

Belongs to the class I-like SAM-binding methyltransferase superfamily. RNA methyltransferase RlmE family. SPB1 subfamily. In terms of assembly, component of the nucleolar and nucleoplasmic pre-60S ribosomal particle.

It is found in the nucleus. The protein localises to the nucleolus. The catalysed reaction is a ribonucleotide in rRNA + S-adenosyl-L-methionine = a 2'-O-methylribonucleotide in rRNA + S-adenosyl-L-homocysteine + H(+). Functionally, required for proper assembly of pre-ribosomal particles during the biogenesis of the 60S ribosomal subunit. The protein is AdoMet-dependent rRNA methyltransferase SPB1 of Candida albicans (strain SC5314 / ATCC MYA-2876) (Yeast).